Consider the following 236-residue polypeptide: Glyoxalase 3 (236 aa).

Active-site residues include Cys-136, His-137, and Glu-168. Cys-136 carries the cysteine sulfinic acid (-SO2H) modification.

It belongs to the peptidase C56 family. HSP31-like subfamily. Monomer.

The enzyme catalyses methylglyoxal + H2O = (R)-lactate + H(+). Catalyzes the conversion of methylglyoxal (MG) to D-lactate in a single glutathione (GSH)-independent step. Selective for MG, does not use glyoxal as substrate. Plays a role in detoxifying endogenously produced MG, particularly when glycerol is the principal carbon source. Important for viability in stationary phase. The protein is Glyoxalase 3 of Candida albicans (strain SC5314 / ATCC MYA-2876) (Yeast).